Here is a 435-residue protein sequence, read N- to C-terminus: 5-methylthioadenosine/S-adenosylhomocysteine deaminase (435 aa).

Residues H65 and H67 each contribute to the Zn(2+) site. Positions 94, 150, and 189 each coordinate substrate. H216 is a binding site for Zn(2+). E219 and D304 together coordinate substrate. D304 provides a ligand contact to Zn(2+).

This sequence belongs to the metallo-dependent hydrolases superfamily. MTA/SAH deaminase family. It depends on Zn(2+) as a cofactor.

It carries out the reaction S-adenosyl-L-homocysteine + H2O + H(+) = S-inosyl-L-homocysteine + NH4(+). The catalysed reaction is S-methyl-5'-thioadenosine + H2O + H(+) = S-methyl-5'-thioinosine + NH4(+). In terms of biological role, catalyzes the deamination of 5-methylthioadenosine and S-adenosyl-L-homocysteine into 5-methylthioinosine and S-inosyl-L-homocysteine, respectively. Is also able to deaminate adenosine. In Bacillus cereus (strain 03BB102), this protein is 5-methylthioadenosine/S-adenosylhomocysteine deaminase.